The chain runs to 477 residues: Nuclear receptor subfamily 6 group A member 1-A (477 aa).

The segment at residues 40-115 is a DNA-binding region (nuclear receptor); it reads QRSCLICGDR…MGMNRKAIRE (76 aa). NR C4-type zinc fingers lie at residues 43–63 and 79–98; these read CLIC…CEGC and CSRD…CQYC. Residues 147 to 187 are disordered; it reads DEANMPEHTWGNNGDSDHSSPGNGVSDGNQPSPVSTLSSNR. Residues 156–187 show a composition bias toward polar residues; it reads WGNNGDSDHSSPGNGVSDGNQPSPVSTLSSNR. Residues 230–461 enclose the NR LBD domain; the sequence is QSHTLIGQLV…HSCKSSLSSY (232 aa).

It belongs to the nuclear hormone receptor family. NR6 subfamily. In terms of assembly, homodimer. As to expression, expressed in germ cells, being predominant in previtellogenic oocytes in the ovary and in spermatocytes in the testis.

It localises to the nucleus. Its function is as follows. Probable orphan nuclear receptor. Binds to a response element containing repeats of the motif 5'-AGGTCA-3'. The polypeptide is Nuclear receptor subfamily 6 group A member 1-A (Danio rerio (Zebrafish)).